Here is a 494-residue protein sequence, read N- to C-terminus: Psoralen synthase (494 aa).

Residues 12–29 (YFFSLFLVTIFLYKWLTL) form a helical membrane-spanning segment. Cys436 is a binding site for heme.

This sequence belongs to the cytochrome P450 family.

Its subcellular location is the endoplasmic reticulum membrane. The protein resides in the microsome membrane. The catalysed reaction is (7S)-marmesin + reduced [NADPH--hemoprotein reductase] + O2 = psoralen + acetone + oxidized [NADPH--hemoprotein reductase] + 2 H2O + H(+). Inhibited by columbianetin. In terms of biological role, involved in linear furanocumarin (psoralen) biosynthesis. Converts marmesin to psoralen. This is Psoralen synthase (CYP71AJ1) from Ammi majus (Bishop's weed).